The following is a 453-amino-acid chain: Probable 1,4-beta-D-glucan cellobiohydrolase A (453 aa).

Positions 1-17 (MYQRALLFSALATAVSA) are cleaved as a signal peptide. Glu-226 functions as the Nucleophile in the catalytic mechanism. The active-site Proton donor is Glu-231. Residue Asn-284 is glycosylated (N-linked (GlcNAc...) asparagine).

This sequence belongs to the glycosyl hydrolase 7 (cellulase C) family.

It is found in the secreted. The enzyme catalyses Hydrolysis of (1-&gt;4)-beta-D-glucosidic linkages in cellulose and cellotetraose, releasing cellobiose from the non-reducing ends of the chains.. In terms of biological role, the biological conversion of cellulose to glucose generally requires three types of hydrolytic enzymes: (1) Endoglucanases which cut internal beta-1,4-glucosidic bonds; (2) Exocellobiohydrolases that cut the disaccharide cellobiose from the non-reducing end of the cellulose polymer chain; (3) Beta-1,4-glucosidases which hydrolyze the cellobiose and other short cello-oligosaccharides to glucose. This is Probable 1,4-beta-D-glucan cellobiohydrolase A (cbhA) from Aspergillus clavatus (strain ATCC 1007 / CBS 513.65 / DSM 816 / NCTC 3887 / NRRL 1 / QM 1276 / 107).